Consider the following 370-residue polypeptide: MLSYETNARIQELRDKFENIKTTVDVDKIKEKLSRIEKELSDPSVWSDQRRAGKLGQQAQALRSQLDLLNKVQELFENIDIAVELSEEDESYLENLNELLKEAEDMVKEFELNILLSSPYDAYNAYLSVHPGAGGTESQDWASMLLRMYIRWAERNNYKVTTIEEQPGEEAGIKSATINIAGPYAYGKLKYEAGVHRLVRISPFDANHRRHTSFASVSVFPEMDDDVEIDIRPEDLKIDTYRAGGAGGQHVNRTESAVRITHIPTGIVVTCQNERSQHQNKATAMKILKAKLFELELEKKRQEKMKLMGEQKDIAWGNQIRSYVFQPYTMVKDHRTNYETGDVQAVMDGYIDDFIEKELLFFASIDEDKE.

N5-methylglutamine is present on glutamine 249.

The protein belongs to the prokaryotic/mitochondrial release factor family. Post-translationally, methylated by PrmC. Methylation increases the termination efficiency of RF2.

It is found in the cytoplasm. Peptide chain release factor 2 directs the termination of translation in response to the peptide chain termination codons UGA and UAA. This is Peptide chain release factor 2 from Kosmotoga olearia (strain ATCC BAA-1733 / DSM 21960 / TBF 19.5.1).